The sequence spans 336 residues: DNA-directed RNA polymerase subunit alpha (336 aa).

The tract at residues 1–233 (MSSNSFLTPR…EQFSFFADLE (233 aa)) is alpha N-terminal domain (alpha-NTD). The interval 247-336 (IDPILLRPVD…YIKEPGHASS (90 aa)) is alpha C-terminal domain (alpha-CTD).

The protein belongs to the RNA polymerase alpha chain family. In terms of assembly, homodimer. The RNAP catalytic core consists of 2 alpha, 1 beta, 1 beta' and 1 omega subunit. When a sigma factor is associated with the core the holoenzyme is formed, which can initiate transcription.

It catalyses the reaction RNA(n) + a ribonucleoside 5'-triphosphate = RNA(n+1) + diphosphate. DNA-dependent RNA polymerase catalyzes the transcription of DNA into RNA using the four ribonucleoside triphosphates as substrates. The polypeptide is DNA-directed RNA polymerase subunit alpha (Nitrosomonas europaea (strain ATCC 19718 / CIP 103999 / KCTC 2705 / NBRC 14298)).